A 196-amino-acid polypeptide reads, in one-letter code: Small ribosomal subunit protein uS4c (196 aa).

Residues 16 to 36 (GALPGLTRKTPKSGSNLKKKF) form a disordered region. An S4 RNA-binding domain is found at 89–169 (MRLDNILFRL…LPKHLTIDTL (81 aa)).

The protein belongs to the universal ribosomal protein uS4 family. In terms of assembly, part of the 30S ribosomal subunit. Contacts protein S5. The interaction surface between S4 and S5 is involved in control of translational fidelity.

The protein localises to the plastid. Its subcellular location is the chloroplast. Functionally, one of the primary rRNA binding proteins, it binds directly to 16S rRNA where it nucleates assembly of the body of the 30S subunit. With S5 and S12 plays an important role in translational accuracy. This is Small ribosomal subunit protein uS4c (rps4) from Brachypodium pinnatum (Tor grass).